We begin with the raw amino-acid sequence, 134 residues long: UPF0412 protein YaaI (134 aa).

The first 23 residues, 1 to 23, serve as a signal peptide directing secretion; sequence MKSVFTISASLAISLMLCCTAQA.

It belongs to the UPF0412 family.

In Shigella dysenteriae serotype 1 (strain Sd197), this protein is UPF0412 protein YaaI.